Reading from the N-terminus, the 82-residue chain is M-zodatoxin-Lt3a (82 aa).

A signal peptide spans 1-22 (MKTYAVLLALVVAFVCIAESTG). Positions 23–61 (YPVEDLEDDELTELEAEALLEDLLEDLELEDLDYNEEAR) are excised as a propeptide. The Processing quadruplet motif signature appears at 58–61 (EEAR). Alanine 81 is subject to Alanine amide.

It belongs to the cationic peptide 03 (latarcin) family. 03 subfamily. Cleavage of the propeptide depends on the processing quadruplet motif (XXXR, with at least one of X being E). As to expression, expressed by the venom gland.

The protein resides in the secreted. The protein localises to the target cell membrane. Its function is as follows. It has antimicrobial activity against Gram-positive bacteria (A.globiformis VKM Ac-1112 (MIC=0.3 uM), and B.subtilis VKM B-501 (MIC=1.2 uM)), Gram-negative bacteria (E.coli DH5-alpha (MIC=2.5 uM), E.coli MH1 (MIC=6.0 uM), and P.aeruginosa PAO1 (MIC&gt;40 uM)), and yeasts (P.pastoris GS115 (MIC=20 uM), and S.cerevisiae Y190 (MIC=20 uM)). Causes paralysis, but is not lethal when injected into insect (M.domestica) larvae. A second study reports antibacterial activity against E.coli (MIC=100 uM) and S.aureus (MIC=84 uM). Furthermore, increases efficacy of antibiotics (chloramphenicol, streptomycin, kanamycin, novobiocin) when tested against E.coli, probably by facilitating their incorporation into the bacteria. This is M-zodatoxin-Lt3a from Lachesana tarabaevi (Spider).